The chain runs to 821 residues: Fibroblast growth factor receptor 2 (821 aa).

The N-terminal stretch at 1-21 (MVSWGRFICLVVVTMATLSLA) is a signal peptide. Residues 22-377 (RPSFSLVEDT…EITASPDYLE (356 aa)) lie on the Extracellular side of the membrane. The 101-residue stretch at 25 to 125 (FSLVEDTTLE…ETWYFMVNVT (101 aa)) folds into the Ig-like C2-type 1 domain. The cysteines at positions 62 and 107 are disulfide-linked. Asparagine 83 and asparagine 123 each carry an N-linked (GlcNAc...) asparagine glycan. Residues 131–144 (GDDEDDTDGAEDFV) show a composition bias toward acidic residues. The interval 131-151 (GDDEDDTDGAEDFVSENSNNK) is disordered. Ig-like C2-type domains lie at 154–247 (PYWT…YHLD) and 256–358 (PILQ…AWLT). The tract at residues 161-178 (KMEKRLHAVPAANTVKFR) is heparin-binding. Cysteine 179 and cysteine 231 form a disulfide bridge. Residues asparagine 228, asparagine 241, asparagine 265, asparagine 297, asparagine 318, and asparagine 331 are each glycosylated (N-linked (GlcNAc...) asparagine). Cysteine 278 and cysteine 342 are disulfide-bonded. The helical transmembrane segment at 378 to 398 (IAIYCIGVFLIACMVVTVILC) threads the bilayer. Residues 399 to 821 (RMKNTTKKPD…YPHINGSVKT (423 aa)) lie on the Cytoplasmic side of the membrane. Residue tyrosine 466 is modified to Phosphotyrosine; by autocatalysis. A Protein kinase domain is found at 481–770 (LTLGKPLGEG…LTLTTNEEYL (290 aa)). ATP-binding positions include 487-495 (LGEGCFGQV), lysine 517, 565-567 (EYA), and asparagine 571. 2 positions are modified to phosphotyrosine; by autocatalysis: tyrosine 586 and tyrosine 588. Aspartate 626 functions as the Proton acceptor in the catalytic mechanism. 3 positions are modified to phosphotyrosine; by autocatalysis: tyrosine 656, tyrosine 657, and tyrosine 769. Serine 780 is modified (phosphoserine).

This sequence belongs to the protein kinase superfamily. Tyr protein kinase family. Fibroblast growth factor receptor subfamily. Monomer. Homodimer after ligand binding. Interacts predominantly with FGF1 and FGF2, but can also interact with FGF3, FGF4, FGF6, FGF7, FGF8, FGF9, FGF10, FGF17, FGF18 and FGF22 (in vitro). Ligand specificity is determined by tissue-specific expression of isoforms, and differences in the third Ig-like domain are crucial for ligand specificity. Isoform 1 has high affinity for FGF1 and FGF2, but low affinity for FGF7. Isoform 3 has high affinity for FGF1 and FGF7, and has much higher affinity for FGF7 than isoform 1 (in vitro). Affinity for fibroblast growth factors (FGFs) is increased by heparan sulfate glycosaminoglycans that function as coreceptors. Likewise, KLB increases the affinity for FGF19 and FGF21. Interacts with PLCG1, GRB2 and PAK4. Interacts with FLRT2. In terms of processing, autophosphorylated. Binding of FGF family members together with heparan sulfate proteoglycan or heparin promotes receptor dimerization and autophosphorylation on several tyrosine residues. Autophosphorylation occurs in trans between the two FGFR molecules present in the dimer. Phosphorylation at Tyr-769 is essential for interaction with PLCG1. Post-translationally, N-glycosylated in the endoplasmic reticulum. The N-glycan chains undergo further maturation to an Endo H-resistant form in the Golgi apparatus. Ubiquitinated. FGFR2 is rapidly ubiquitinated after autophosphorylation, leading to internalization and degradation. Subject to degradation both in lysosomes and by the proteasome.

The protein localises to the cell membrane. It localises to the golgi apparatus. It is found in the cytoplasmic vesicle. The protein resides in the secreted. The enzyme catalyses L-tyrosyl-[protein] + ATP = O-phospho-L-tyrosyl-[protein] + ADP + H(+). Present in an inactive conformation in the absence of bound ligand. Ligand binding leads to dimerization and activation by autophosphorylation on tyrosine residues. Inhibited by ARQ 523 and ARQ 069; these compounds maintain the kinase in an inactive conformation and inhibit autophosphorylation. In terms of biological role, tyrosine-protein kinase that acts as a cell-surface receptor for fibroblast growth factors and plays an essential role in the regulation of cell proliferation, differentiation, migration and apoptosis, and in the regulation of embryonic development. Required for normal embryonic patterning, trophoblast function, limb bud development, lung morphogenesis, osteogenesis and skin development. Plays an essential role in the regulation of osteoblast differentiation, proliferation and apoptosis, and is required for normal skeleton development. Promotes cell proliferation in keratinocytes and immature osteoblasts, but promotes apoptosis in differentiated osteoblasts. Phosphorylates PLCG1, FRS2 and PAK4. Ligand binding leads to the activation of several signaling cascades. Activation of PLCG1 leads to the production of the cellular signaling molecules diacylglycerol and inositol 1,4,5-trisphosphate. Phosphorylation of FRS2 triggers recruitment of GRB2, GAB1, PIK3R1 and SOS1, and mediates activation of RAS, MAPK1/ERK2, MAPK3/ERK1 and the MAP kinase signaling pathway, as well as of the AKT1 signaling pathway. FGFR2 signaling is down-regulated by ubiquitination, internalization and degradation. Mutations that lead to constitutive kinase activation or impair normal FGFR2 maturation, internalization and degradation lead to aberrant signaling. Over-expressed FGFR2 promotes activation of STAT1. The sequence is that of Fibroblast growth factor receptor 2 (FGFR2) from Homo sapiens (Human).